Here is a 466-residue protein sequence, read N- to C-terminus: MGSMSTPAASANGGQVLLLPFPAAQGHTNPMLQFGRRLAYHGLRPTLVTTRYVLSTTPPPGDPFRVAAISDGFDDASGMAALPDPGEYLRTLEAHGARTLAELLLSEARAGRPARVLVYDPHLPWARRVARAAGVATAAFLSQPCAVDLIYGEVCARRLALPVTPTDARGLYARGVLGVELGPDDVPPFVAAPELTPAFCEQSIEQFAGLEDDDDVLVNSFSDLEPKEAAYMESTWRAKTIGPSLPSFYLDDGRLRSNTAYGFNLFRSTVPCMEWLDKQPPRSVVLVSYGTVSTFDVAKLEELGNGLCNSGKPFLWVVRSNEEHKLSVQLRKKCEKRGLIVPFCPQLEVLAHKATGCFLSHCGWNSTLEAIVNGVPLVAMPHWADQPTISKYVESLWGMGVRVQLDKSGILQREEVERCIREVMDGDRKEDYRRNATRLMKKAKESMQEGGSSDKNIAEFAAKYSN.

Catalysis depends on His-27, which acts as the Proton acceptor. Residue His-27 participates in UDP-alpha-D-glucose binding. Asp-120 acts as the Charge relay in catalysis. Positions 142, 291, 343, 344, 361, 364, 365, 366, 369, 385, and 386 each coordinate UDP-alpha-D-glucose. UDP contacts are provided by Thr-291, Phe-343, Cys-344, and His-361. The UDP site is built by Asn-365, Ser-366, and Glu-369.

This sequence belongs to the UDP-glycosyltransferase family.

Functionally, involved in the detoxification of the Fusarium mycotoxin deoxynivalenol by the transfer of glucose from UDP-D-glucose to the hydroxyl group at C-3, forming deoxynivalenol-3-O-beta-D-glucoside. This Oryza sativa subsp. japonica (Rice) protein is UDP-glycosyltransferase 79.